Reading from the N-terminus, the 106-residue chain is uncharacterized protein (106 aa).

This is an uncharacterized protein from Invertebrate iridescent virus 3 (IIV-3).